A 61-amino-acid polypeptide reads, in one-letter code: DNA-directed RNA polymerase subunit Rpo6 (61 aa).

It belongs to the archaeal Rpo6/eukaryotic RPB6 RNA polymerase subunit family. In terms of assembly, part of the RNA polymerase complex.

It localises to the cytoplasm. The enzyme catalyses RNA(n) + a ribonucleoside 5'-triphosphate = RNA(n+1) + diphosphate. DNA-dependent RNA polymerase (RNAP) catalyzes the transcription of DNA into RNA using the four ribonucleoside triphosphates as substrates. The protein is DNA-directed RNA polymerase subunit Rpo6 of Thermoplasma acidophilum (strain ATCC 25905 / DSM 1728 / JCM 9062 / NBRC 15155 / AMRC-C165).